Here is a 165-residue protein sequence, read N- to C-terminus: Large ribosomal subunit protein mL49 (165 aa).

Low complexity predominate over residues 42–75 (TTATTTTPLQQQQQQQPTTQPTTPIQTQTGAAPT). Positions 42-81 (TTATTTTPLQQQQQQQPTTQPTTPIQTQTGAAPTESTKPV) are disordered.

It belongs to the mitochondrion-specific ribosomal protein mL49 family. As to quaternary structure, component of the mitochondrial large ribosomal subunit (mt-LSU). Mature N.crassa 74S mitochondrial ribosomes consist of a small (37S) and a large (54S) subunit. The 37S small subunit contains a 16S ribosomal RNA (16S mt-rRNA) and 32 different proteins. The 54S large subunit contains a 23S rRNA (23S mt-rRNA) and 42 different proteins.

It is found in the mitochondrion. In terms of biological role, component of the mitochondrial ribosome (mitoribosome), a dedicated translation machinery responsible for the synthesis of mitochondrial genome-encoded proteins, including at least some of the essential transmembrane subunits of the mitochondrial respiratory chain. The mitoribosomes are attached to the mitochondrial inner membrane and translation products are cotranslationally integrated into the membrane. The chain is Large ribosomal subunit protein mL49 (img2) from Neurospora crassa (strain ATCC 24698 / 74-OR23-1A / CBS 708.71 / DSM 1257 / FGSC 987).